A 267-amino-acid chain; its full sequence is Beta-lactamase OXA-5 (267 aa).

An N-terminal signal peptide occupies residues 1-19; it reads MKTIAAYLVLVFYASTALS. S67 acts as the Acyl-ester intermediate in catalysis. K70 is subject to N6-carboxylysine. 205 to 207 contacts substrate; it reads KTG.

Belongs to the class-D beta-lactamase family.

The enzyme catalyses a beta-lactam + H2O = a substituted beta-amino acid. With respect to regulation, inhibited by clavulanic acid. In terms of biological role, hydrolyzes both oxacillin and methicillin. The polypeptide is Beta-lactamase OXA-5 (bla) (Pseudomonas aeruginosa).